The following is a 285-amino-acid chain: Steroidogenic acute regulatory protein (285 aa).

Residues 67–280 (TLNDVEMSYI…LRSRMTSSSN (214 aa)) form the START domain.

In terms of assembly, may interact with TSPO.

Its subcellular location is the mitochondrion. The enzyme catalyses cholesterol(in) = cholesterol(out). The protein operates within steroid metabolism; cholesterol metabolism. In terms of biological role, plays a key role in steroid hormone synthesis by enhancing the metabolism of cholesterol into pregnenolone. Mediates the transfer of cholesterol from the outer mitochondrial membrane to the inner mitochondrial membrane where it is cleaved to pregnenolone. This Xenopus laevis (African clawed frog) protein is Steroidogenic acute regulatory protein (star).